The chain runs to 367 residues: Glutamate 5-kinase (367 aa).

K10 contributes to the ATP binding site. Substrate-binding residues include S50, D137, and N149. Residues 169 to 170 (TD) and 211 to 217 (TGGMGTK) each bind ATP. The PUA domain occupies 275–353 (AGEITVDEGA…QQIDAILGYE (79 aa)).

It belongs to the glutamate 5-kinase family.

The protein resides in the cytoplasm. The enzyme catalyses L-glutamate + ATP = L-glutamyl 5-phosphate + ADP. Its pathway is amino-acid biosynthesis; L-proline biosynthesis; L-glutamate 5-semialdehyde from L-glutamate: step 1/2. Its function is as follows. Catalyzes the transfer of a phosphate group to glutamate to form L-glutamate 5-phosphate. The sequence is that of Glutamate 5-kinase from Citrobacter koseri (strain ATCC BAA-895 / CDC 4225-83 / SGSC4696).